Reading from the N-terminus, the 91-residue chain is Ribonuclease P protein component 4 (91 aa).

Zn(2+)-binding residues include C55, C58, C78, and C81.

It belongs to the eukaryotic/archaeal RNase P protein component 4 family. As to quaternary structure, consists of a catalytic RNA component and at least 4-5 protein subunits. The cofactor is Zn(2+).

It is found in the cytoplasm. The catalysed reaction is Endonucleolytic cleavage of RNA, removing 5'-extranucleotides from tRNA precursor.. Part of ribonuclease P, a protein complex that generates mature tRNA molecules by cleaving their 5'-ends. This is Ribonuclease P protein component 4 from Thermoplasma acidophilum (strain ATCC 25905 / DSM 1728 / JCM 9062 / NBRC 15155 / AMRC-C165).